The primary structure comprises 189 residues: Peptidyl-tRNA hydrolase (189 aa).

Y18 provides a ligand contact to tRNA. The Proton acceptor role is filled by H23. Residues F67, N69, and N115 each contribute to the tRNA site.

This sequence belongs to the PTH family. As to quaternary structure, monomer.

It is found in the cytoplasm. The catalysed reaction is an N-acyl-L-alpha-aminoacyl-tRNA + H2O = an N-acyl-L-amino acid + a tRNA + H(+). Its function is as follows. Hydrolyzes ribosome-free peptidyl-tRNAs (with 1 or more amino acids incorporated), which drop off the ribosome during protein synthesis, or as a result of ribosome stalling. Catalyzes the release of premature peptidyl moieties from peptidyl-tRNA molecules trapped in stalled 50S ribosomal subunits, and thus maintains levels of free tRNAs and 50S ribosomes. This is Peptidyl-tRNA hydrolase from Leptospira borgpetersenii serovar Hardjo-bovis (strain JB197).